The primary structure comprises 275 residues: NADPH-dependent 7-cyano-7-deazaguanine reductase (275 aa).

81–83 (IES) serves as a coordination point for substrate. Position 83-84 (83-84 (SK)) interacts with NADPH. Cys-181 acts as the Thioimide intermediate in catalysis. Residue Asp-188 is the Proton donor of the active site. Residue 220 to 221 (HE) participates in substrate binding. 249–250 (RG) serves as a coordination point for NADPH.

It belongs to the GTP cyclohydrolase I family. QueF type 2 subfamily. In terms of assembly, homodimer.

The protein localises to the cytoplasm. The catalysed reaction is 7-aminomethyl-7-carbaguanine + 2 NADP(+) = 7-cyano-7-deazaguanine + 2 NADPH + 3 H(+). It functions in the pathway tRNA modification; tRNA-queuosine biosynthesis. Its function is as follows. Catalyzes the NADPH-dependent reduction of 7-cyano-7-deazaguanine (preQ0) to 7-aminomethyl-7-deazaguanine (preQ1). The protein is NADPH-dependent 7-cyano-7-deazaguanine reductase of Xylella fastidiosa (strain M23).